The chain runs to 411 residues: Methylthioribose-1-phosphate isomerase (411 aa).

D284 (proton donor) is an active-site residue.

The protein belongs to the eIF-2B alpha/beta/delta subunits family. MtnA subfamily.

It is found in the cytoplasm. The protein localises to the nucleus. The enzyme catalyses 5-(methylsulfanyl)-alpha-D-ribose 1-phosphate = 5-(methylsulfanyl)-D-ribulose 1-phosphate. The protein operates within amino-acid biosynthesis; L-methionine biosynthesis via salvage pathway; L-methionine from S-methyl-5-thio-alpha-D-ribose 1-phosphate: step 1/6. Catalyzes the interconversion of methylthioribose-1-phosphate (MTR-1-P) into methylthioribulose-1-phosphate (MTRu-1-P). The chain is Methylthioribose-1-phosphate isomerase from Komagataella phaffii (strain GS115 / ATCC 20864) (Yeast).